Reading from the N-terminus, the 199-residue chain is CASP-like protein 2B1 (199 aa).

Residues 1-26 lie on the Cytoplasmic side of the membrane; sequence MSYLGVGLSPVNVAGTKMKLMDRKVR. The chain crosses the membrane as a helical span at residues 27 to 47; sequence LTELILRCSVCALALVAAILI. The Extracellular segment spans residues 48 to 69; it reads ATDTQVKEIFTIQKKAKYTDMK. A helical membrane pass occupies residues 70–90; the sequence is ALVFLVVVNGIAAAYSLLHMV. The Cytoplasmic segment spans residues 91-106; it reads RCVVGMMKGSVLFSKP. Residues 107–127 form a helical membrane-spanning segment; that stretch reads LAWAIFSGDQAIAYLTVAGVA. The Extracellular segment spans residues 128 to 164; sequence AAAQSAAFAKLGEPELQWMKICTIYGKFCNQVGEGIA. The helical transmembrane segment at 165 to 185 threads the bilayer; it reads TALLASIGMVLISSISAFALF. Residues 186 to 199 lie on the Cytoplasmic side of the membrane; the sequence is RLYGGNKAQQGSRW.

It belongs to the Casparian strip membrane proteins (CASP) family. Homodimer and heterodimers.

It is found in the cell membrane. The chain is CASP-like protein 2B1 from Eutrema halophilum (Salt cress).